Consider the following 757-residue polypeptide: Transmembrane channel-like protein 1 (757 aa).

Residues 1-74 form a disordered region; that stretch reads MLQIQVEEKE…RRRLRRGAEE (74 aa). Residues 1-176 are Cytoplasmic-facing; that stretch reads MLQIQVEEKE…KIKAIESQFG (176 aa). A compositionally biased stretch (acidic residues) spans 8–23; that stretch reads EKEEDTEESSSEEEED. S30 is modified (phosphoserine). Residue T38 is modified to Phosphothreonine. A compositionally biased stretch (acidic residues) spans 43-54; the sequence is NEDDPEPEPEDE. Positions 81–130 are required for interaction with CIB2; sequence EELERLKALLDENRQMIATVKCKPWKMEKKIEVLKEAKKFVSENEGALGK. Phosphoserine is present on S122. The helical transmembrane segment at 177–214 threads the bilayer; that stretch reads SSVASYFLFLRWMYGVNMVLFVLTFSLIMLPEYLWGLP. Residues 215–265 are Extracellular-facing; that stretch reads YGSLPRKTVPRAEEASAANFGVLYDFNGLAQYSVLFYGYYDNKRTIGWLNF. The helical transmembrane segment at 266–297 threads the bilayer; it reads RLPLSYFLVGIMCIGYSFLVVLKAMTKNIGDD. The interval 298 to 352 is required for interaction with CIB2; that stretch reads GGGDDNTFNFSWKVFCSWDYLIGNPETADNKFNSITMNFKEAIIEERAAQVEENI. Residues 298–353 lie on the Cytoplasmic side of the membrane; the sequence is GGGDDNTFNFSWKVFCSWDYLIGNPETADNKFNSITMNFKEAIIEERAAQVEENIH. S308 is modified (phosphoserine). Residues 354–384 traverse the membrane as a helical segment; it reads LIRFLRFLANFFVFLTLGASGYLIFWAVKRS. Over 385–396 the chain is Extracellular; sequence QEFAQQDPDTLG. Residue T394 is modified to Phosphothreonine. The chain crosses the membrane as a helical span at residues 397–424; that stretch reads WWEKNEMNMVMSLLGMFCPTLFDLFAEL. Over 425–428 the chain is Cytoplasmic; it reads EDYH. Residues 429 to 463 form a helical membrane-spanning segment; sequence PLIALKWLLGRIFALLLGNLYVFILALMDEINNKI. Residues 464–512 are Extracellular-facing; sequence EEEKLVKANITLWEANMIKAYNESLSGLSGNTTGAPFFVHPADVPRGPC. A helical membrane pass occupies residues 513-550; sequence WETMVGQEFVRLTVSDVLTTYVTILIGDFLRACFVRFC. Residues 551 to 569 lie on the Cytoplasmic side of the membrane; that stretch reads NYCWCWDLEYGYPSYTEFD. Residues 570-590 form a helical membrane-spanning segment; that stretch reads ISGNVLALIFNQGMIWMGSFF. Residues 591-593 lie on the Extracellular side of the membrane; it reads APS. Residues 594–616 traverse the membrane as a helical segment; sequence LPGINILRLHTSMYFQCWAVMCC. At 617–630 the chain is on the cytoplasmic side; the sequence is NVPEARVFKASRSN. Residues 631–654 form a helical membrane-spanning segment; it reads NFYLGMLLLILFLSTMPVLYMIVS. At 655–697 the chain is on the extracellular side; it reads LPPSFDCGPFSGKNRMFEVIGETLEHDFPSWMAKILRQLSNPG. A helical membrane pass occupies residues 698-731; it reads LVIAVILVMVLTIYYLNATAKGQKAANLDLKKKM. Residues 732-757 lie on the Cytoplasmic side of the membrane; that stretch reads KQQALENKMRNKKMAAARAAAAAGGQ.

The protein belongs to the TMC family. As to quaternary structure, forms the MET channel composed of TMC dimer (TMC1 or TMC2), TMIE, TOMT, CIB (CIB2 or CIB3), LHFPL5 and PCDH15. Interacts with PIEZO1 and PIEZO2; the interaction may be part of the MET complex. The interaction of TMC1 and TMC2 with TOMT is required for the transportation of TMC1/2 into the stereocilia of hair cells. Interacts (via N-terminus) with both isoforms CD1 and CD3 of PCDH15. Can form a heterodimer with TMC2, TMC5 or TMC7. Detected in cochlear inner and outer hair cells and in neurosensory epithelia of the vestibular end organs. Also expressed in cortex, cerebellum, eye, colon, ovary and testis.

It is found in the cell membrane. It catalyses the reaction Ca(2+)(in) = Ca(2+)(out). In terms of biological role, pore-forming subunit of the mechanotransducer (MET) non-selective cation channel complex located at the tips of stereocilia of cochlear hair cells and that mediates sensory transduction in the auditory system. The MET complex is composed of two dimeric pore-forming ion-conducting transmembrane TMC (TMC1 or TMC2) subunits, several auxiliary proteins including LHFPL5, TMIE, CIB2/3 and TOMT, the tip-link PCDH15, and possibly the PIEZO subunits. MET channel is activated by tension in the tip-link extending from the side wall of one stereocilium to the tip of the adjacent shorter stereocilium, where the channel is located. TMC1 MET channel is highly permeable to calcium and likely transports monovalent cations. Also involved in vestibular hair cells transduction current. This is Transmembrane channel-like protein 1 from Mus musculus (Mouse).